We begin with the raw amino-acid sequence, 223 residues long: Deoxyribose-phosphate aldolase (223 aa).

Catalysis depends on D91, which acts as the Proton donor/acceptor. K153 (schiff-base intermediate with acetaldehyde) is an active-site residue. K183 functions as the Proton donor/acceptor in the catalytic mechanism.

This sequence belongs to the DeoC/FbaB aldolase family. DeoC type 1 subfamily.

The protein resides in the cytoplasm. The catalysed reaction is 2-deoxy-D-ribose 5-phosphate = D-glyceraldehyde 3-phosphate + acetaldehyde. It participates in carbohydrate degradation; 2-deoxy-D-ribose 1-phosphate degradation; D-glyceraldehyde 3-phosphate and acetaldehyde from 2-deoxy-alpha-D-ribose 1-phosphate: step 2/2. Its function is as follows. Catalyzes a reversible aldol reaction between acetaldehyde and D-glyceraldehyde 3-phosphate to generate 2-deoxy-D-ribose 5-phosphate. In Mycoplasmopsis synoviae (strain 53) (Mycoplasma synoviae), this protein is Deoxyribose-phosphate aldolase.